The sequence spans 225 residues: Probable septum site-determining protein MinC (225 aa).

It belongs to the MinC family. Interacts with MinD and FtsZ.

Functionally, cell division inhibitor that blocks the formation of polar Z ring septums. Rapidly oscillates between the poles of the cell to destabilize FtsZ filaments that have formed before they mature into polar Z rings. Prevents FtsZ polymerization. This is Probable septum site-determining protein MinC from Listeria monocytogenes serotype 4b (strain CLIP80459).